The sequence spans 353 residues: F-box protein At3g58530 (353 aa).

One can recognise an F-box; degenerate domain in the interval 8-56 (EEEEETWRREIVTSVMRLVSTRLPQTDLISLLLVSPWLYRTLISYPSIW).

The protein is F-box protein At3g58530 of Arabidopsis thaliana (Mouse-ear cress).